A 357-amino-acid polypeptide reads, in one-letter code: Phosphoribosylformylglycinamidine cyclo-ligase (357 aa).

The protein belongs to the AIR synthase family.

It localises to the cytoplasm. It carries out the reaction 2-formamido-N(1)-(5-O-phospho-beta-D-ribosyl)acetamidine + ATP = 5-amino-1-(5-phospho-beta-D-ribosyl)imidazole + ADP + phosphate + H(+). Its pathway is purine metabolism; IMP biosynthesis via de novo pathway; 5-amino-1-(5-phospho-D-ribosyl)imidazole from N(2)-formyl-N(1)-(5-phospho-D-ribosyl)glycinamide: step 2/2. In Rhodopseudomonas palustris (strain ATCC BAA-98 / CGA009), this protein is Phosphoribosylformylglycinamidine cyclo-ligase.